A 492-amino-acid polypeptide reads, in one-letter code: Bifunctional protein GlmU (492 aa).

A pyrophosphorylase region spans residues 1 to 238 (MRDAAVVILA…AALVAGVNDR (238 aa)). UDP-N-acetyl-alpha-D-glucosamine contacts are provided by residues 9-12 (LAAG), lysine 23, glutamine 80, and 85-86 (GT). Aspartate 111 serves as a coordination point for Mg(2+). Glycine 148, glutamate 163, asparagine 178, and asparagine 236 together coordinate UDP-N-acetyl-alpha-D-glucosamine. Mg(2+) is bound at residue asparagine 236. The linker stretch occupies residues 239 to 259 (VQLADLAAVLNRRIVEGHQRA). An N-acetyltransferase region spans residues 260–492 (GVTIIDPAST…EDQGPEATGE (233 aa)). 2 residues coordinate UDP-N-acetyl-alpha-D-glucosamine: arginine 341 and lysine 359. Residue histidine 371 is the Proton acceptor of the active site. 2 residues coordinate UDP-N-acetyl-alpha-D-glucosamine: tyrosine 374 and asparagine 385. Residues alanine 388, 394 to 395 (NY), serine 413, and alanine 431 each bind acetyl-CoA. The span at 469–483 (EAAAAAGAGAGAAAE) shows a compositional bias: low complexity. A disordered region spans residues 469-492 (EAAAAAGAGAGAAAEDQGPEATGE).

In the N-terminal section; belongs to the N-acetylglucosamine-1-phosphate uridyltransferase family. This sequence in the C-terminal section; belongs to the transferase hexapeptide repeat family. As to quaternary structure, homotrimer. Mg(2+) is required as a cofactor.

It is found in the cytoplasm. It catalyses the reaction alpha-D-glucosamine 1-phosphate + acetyl-CoA = N-acetyl-alpha-D-glucosamine 1-phosphate + CoA + H(+). The enzyme catalyses N-acetyl-alpha-D-glucosamine 1-phosphate + UTP + H(+) = UDP-N-acetyl-alpha-D-glucosamine + diphosphate. It participates in nucleotide-sugar biosynthesis; UDP-N-acetyl-alpha-D-glucosamine biosynthesis; N-acetyl-alpha-D-glucosamine 1-phosphate from alpha-D-glucosamine 6-phosphate (route II): step 2/2. It functions in the pathway nucleotide-sugar biosynthesis; UDP-N-acetyl-alpha-D-glucosamine biosynthesis; UDP-N-acetyl-alpha-D-glucosamine from N-acetyl-alpha-D-glucosamine 1-phosphate: step 1/1. Its pathway is bacterial outer membrane biogenesis; LPS lipid A biosynthesis. Functionally, catalyzes the last two sequential reactions in the de novo biosynthetic pathway for UDP-N-acetylglucosamine (UDP-GlcNAc). The C-terminal domain catalyzes the transfer of acetyl group from acetyl coenzyme A to glucosamine-1-phosphate (GlcN-1-P) to produce N-acetylglucosamine-1-phosphate (GlcNAc-1-P), which is converted into UDP-GlcNAc by the transfer of uridine 5-monophosphate (from uridine 5-triphosphate), a reaction catalyzed by the N-terminal domain. The protein is Bifunctional protein GlmU of Mycolicibacterium vanbaalenii (strain DSM 7251 / JCM 13017 / BCRC 16820 / KCTC 9966 / NRRL B-24157 / PYR-1) (Mycobacterium vanbaalenii).